The primary structure comprises 485 residues: Glutamyl-tRNA(Gln) amidotransferase subunit A (485 aa).

Catalysis depends on charge relay system residues Lys-78 and Ser-153. The active-site Acyl-ester intermediate is the Ser-177.

The protein belongs to the amidase family. GatA subfamily. Heterotrimer of A, B and C subunits.

It carries out the reaction L-glutamyl-tRNA(Gln) + L-glutamine + ATP + H2O = L-glutaminyl-tRNA(Gln) + L-glutamate + ADP + phosphate + H(+). Functionally, allows the formation of correctly charged Gln-tRNA(Gln) through the transamidation of misacylated Glu-tRNA(Gln) in organisms which lack glutaminyl-tRNA synthetase. The reaction takes place in the presence of glutamine and ATP through an activated gamma-phospho-Glu-tRNA(Gln). The sequence is that of Glutamyl-tRNA(Gln) amidotransferase subunit A from Lawsonia intracellularis (strain PHE/MN1-00).